A 327-amino-acid polypeptide reads, in one-letter code: MPGPTQTLSPNGENNNDIIQDNNGTIIPFRKHTVRGERSYSWGMAVNVYSTSITQETMSRHDIIAWVNDIVSLNYTKVEQLCSGAAYCQFMDMLFPGCISLKKVKFQAKLEHEYIHNFKLLQASFKRMNVDKVIPVEKLVKGRFQDNLDFIQWFKKFYDANYDGKEYDPVEARQGQDAIPPPDPGEQIFNLPKKSHHANSPTAGAAKSSPAAKPGSTPSRPSSAKRASSSGSASRSDKDLETQVIQLNEQVHSLKLALEGVEKERDFYFGKLREIELLCQEHGQENDDLVQRLMDVLYASEEHEGHTEEPEAEEQAHEQQPPQQEEY.

The tract at residues 1–21 (MPGPTQTLSPNGENNNDIIQD) is disordered. Position 9 is a phosphoserine (Ser9). Residues 57–159 (TMSRHDIIAW…FIQWFKKFYD (103 aa)) form the Calponin-homology (CH) domain. Residue Tyr167 is modified to Phosphotyrosine. Disordered regions lie at residues 171 to 240 (EARQ…DKDL) and 299 to 327 (ASEE…QEEY). The tract at residues 187-327 (QIFNLPKKSH…EQQPPQQEEY (141 aa)) is DCTN1-binding. The span at 200–234 (SPTAGAAKSSPAAKPGSTPSRPSSAKRASSSGSAS) shows a compositional bias: low complexity. Phosphoserine is present on Ser219. Residues 236-306 (SDKDLETQVI…LYASEEHEGH (71 aa)) form the EB1 C-terminal domain. Residues 259–302 (EGVEKERDFYFGKLREIELLCQEHGQENDDLVQRLMDVLYASEE) are APC-binding. Over residues 300 to 317 (SEEHEGHTEEPEAEEQAH) the composition is skewed to basic and acidic residues. The segment covering 318–327 (EQQPPQQEEY) has biased composition (low complexity).

Belongs to the MAPRE family. Interacts with DCTN1. Interacts with APC (via C-terminal). Interacts with monomeric and polymerized tubulin. Interacts with SLAIN1. Interacts (via the N-terminal region) with BAG1.

It localises to the cytoplasm. It is found in the cytoskeleton. Its function is as follows. May be involved in microtubule polymerization, and spindle function by stabilizing microtubules and anchoring them at centrosomes. May play a role in cell migration. The chain is Microtubule-associated protein RP/EB family member 2 (MAPRE2) from Pongo abelii (Sumatran orangutan).